The primary structure comprises 263 residues: HTH-type transcriptional repressor NanR (263 aa).

Residues 1 to 21 form a disordered region; the sequence is MGLMNAFDSQTEDSSPVIGRN. The region spanning 30–98 is the HTH gntR-type domain; it reads KKLSEMVEEE…NGERARVSRP (69 aa). Positions 58 to 77 form a DNA-binding region, H-T-H motif; that stretch reads ERELMAFFNVGRPSVREALA.

Belongs to the NanR family.

Its function is as follows. Transcriptional repressor that controls expression of the genes required for the catabolism of sialic acids. In Escherichia coli O7:K1 (strain IAI39 / ExPEC), this protein is HTH-type transcriptional repressor NanR.